We begin with the raw amino-acid sequence, 87 residues long: Mu-theraphotoxin-Hs1a (87 aa).

The signal sequence occupies residues methionine 1 to alanine 24. A propeptide spanning residues serine 25–arginine 52 is cleaved from the precursor. 3 disulfides stabilise this stretch: cysteine 54/cysteine 67, cysteine 61/cysteine 72, and cysteine 66/cysteine 79.

The protein belongs to the neurotoxin 10 (Hwtx-1) family. 51 (Hntx-8) subfamily. Hntx-8 sub-subfamily. As to expression, expressed by the venom gland.

The protein localises to the secreted. Its function is as follows. Probable sodium channel pore blocker that dose-dependently inhibits voltage-gated sodium channels (VGSC) on DUM neurons in a way similar to tetrodotoxin. Has no effect on the kinetics of activation and inactivation. Seems not to interact with VGSC in an inactivated state. In vivo, reversibly paralyzes cockroaches, and can enhance the muscular contraction elicited by stimulating its nerve. The protein is Mu-theraphotoxin-Hs1a of Cyriopagopus schmidti (Chinese bird spider).